The sequence spans 228 residues: Ras-related protein Rab-33B (228 aa).

GTP is bound by residues N41, V42, G43, K44, T45, C46, T60, and T63. T45 provides a ligand contact to Mg(2+). A Switch 1 motif is present at residues 54–66 (GRFPQRTEATIGV). The Mg(2+) site is built by T63 and D86. A Switch 2 motif is present at residues 87-106 (TAGQERFRKSMVQHYYRNVH). Positions 89, 146, 147, 149, 177, and 178 each coordinate GTP. Residues C226 and C228 are each lipidated (S-geranylgeranyl cysteine). Cysteine methyl ester is present on C228.

Belongs to the small GTPase superfamily. Rab family. In terms of assembly, interacts (GTP- and GDP-bound forms) with ATG16L1; the complex consists of a tetramer where two RAB33B molecules bind independently one molecule of the ATG16L1 homodimer; the interaction promotes ATG12-ATG5-ATG16L1 complex recruitment to phagophores. Interacts with ATG16L2; however interaction is approximately hundred times lower than for ATG16L1. Interacts with RIC1 (via C-terminus domain); the interaction is direct with a preference for RAB33B-GTP. Interacts with RGP1. It depends on Mg(2+) as a cofactor.

Its subcellular location is the golgi apparatus membrane. The protein resides in the golgi apparatus. The protein localises to the cis-Golgi network. It localises to the preautophagosomal structure membrane. It catalyses the reaction GTP + H2O = GDP + phosphate + H(+). Its activity is regulated as follows. Regulated by guanine nucleotide exchange factors (GEFs) which promote the exchange of bound GDP for free GTP. Regulated by GTPase activating proteins (GAPs) such as SGSM2 which increase the GTP hydrolysis activity. Inhibited by GDP dissociation inhibitors (GDIs). The small GTPases Rab are key regulators of intracellular membrane trafficking, from the formation of transport vesicles to their fusion with membranes. Rabs cycle between an inactive GDP-bound form and an active GTP-bound form that is able to recruit to membranes different sets of downstream effectors directly responsible for vesicle formation, movement, tethering and fusion. RAB33B acts, in coordination with RAB6A, to regulate intra-Golgi retrograde trafficking. Participates in autophagosome formation by recruiting the ATG12-ATG5-ATG16L1 complex to phagophores, probably in a nucleotide-independent manner. This is Ras-related protein Rab-33B (RAB33B) from Gallus gallus (Chicken).